A 198-amino-acid polypeptide reads, in one-letter code: Probable nicotinate-nucleotide adenylyltransferase (198 aa).

Belongs to the NadD family.

It carries out the reaction nicotinate beta-D-ribonucleotide + ATP + H(+) = deamido-NAD(+) + diphosphate. Its pathway is cofactor biosynthesis; NAD(+) biosynthesis; deamido-NAD(+) from nicotinate D-ribonucleotide: step 1/1. In terms of biological role, catalyzes the reversible adenylation of nicotinate mononucleotide (NaMN) to nicotinic acid adenine dinucleotide (NaAD). The protein is Probable nicotinate-nucleotide adenylyltransferase of Chlorobium limicola (strain DSM 245 / NBRC 103803 / 6330).